Consider the following 364-residue polypeptide: MSGLFETLGRRALFTFDAEQAHGLSITGLKTGIVTCRTPEDPALSVKVAGLKFPNPLGMAAGYDKNAEVPDALLKLGFGFAEVGTLTPRPQSGNPRPRIFRLVDDKAVINRLGFNNEGHEAAFKRLSRRAGKSGIVGVNIGANKDAEDRIADYVAGIRRFYLLARYFTVNISSPNTPGLRNLQAREALHELLSRVLEARDEEGNMCTLKRPVFLKIAPDLTDEELDDIAAEADAQKLDGIIVSNTTLSRSGLKNPENSNETGGLSGAPLFERSTVVLARMRERVGPDMPLIGVGGIDSAETALAKIKAGADLVQLYTGLIYRGPGLPGEILRGLSTAIKHEGVSSIAELRDRDTKEWAARKLIS.

Residues 61–65 (AGYDK) and Thr85 contribute to the FMN site. Substrate is bound at residue Lys65. Substrate is bound at residue 110 to 114 (NRLGF). Positions 139 and 170 each coordinate FMN. Asn170 provides a ligand contact to substrate. Residue Ser173 is the Nucleophile of the active site. Position 175 (Asn175) interacts with substrate. FMN contacts are provided by Lys215 and Ser243. Residue 244–245 (NT) participates in substrate binding. FMN is bound by residues Gly266, Gly295, and 316–317 (YT).

This sequence belongs to the dihydroorotate dehydrogenase family. Type 2 subfamily. In terms of assembly, monomer. Requires FMN as cofactor.

Its subcellular location is the cell membrane. The enzyme catalyses (S)-dihydroorotate + a quinone = orotate + a quinol. The protein operates within pyrimidine metabolism; UMP biosynthesis via de novo pathway; orotate from (S)-dihydroorotate (quinone route): step 1/1. Its function is as follows. Catalyzes the conversion of dihydroorotate to orotate with quinone as electron acceptor. This Brucella abortus (strain S19) protein is Dihydroorotate dehydrogenase (quinone).